The sequence spans 128 residues: uncharacterized protein (128 aa).

A run of 4 helical transmembrane segments spans residues 5 to 25 (ILALLIWSSSLIVGKLTYSMM), 27 to 47 (PVLVVQVRLIIAMIIVMPLFL), 60 to 80 (QLWWLAFFNYTAVFLLQFIGL), and 87 to 107 (SAVTMIGLEPLLVVFVGHFFF). The region spanning 9 to 110 (LIWSSSLIVG…FVGHFFFKTK (102 aa)) is the EamA domain.

It is found in the cell membrane. This is an uncharacterized protein from Haemophilus influenzae (strain ATCC 51907 / DSM 11121 / KW20 / Rd).